The primary structure comprises 173 residues: Photosystem I assembly protein Ycf3 (173 aa).

TPR repeat units lie at residues 35–68, 72–105, and 120–153; these read AYVY…EENS, SETL…NPNQ, and GRIA…NPGG.

Belongs to the Ycf3 family.

The protein resides in the cellular thylakoid membrane. Functionally, essential for the assembly of the photosystem I (PSI) complex. May act as a chaperone-like factor to guide the assembly of the PSI subunits. This Synechococcus sp. (strain CC9605) protein is Photosystem I assembly protein Ycf3.